We begin with the raw amino-acid sequence, 78 residues long: Defensin beta 136 (78 aa).

A signal peptide spans 1 to 21 (MNLCLSALLFFLVILLPSGKG). 3 cysteine pairs are disulfide-bonded: Cys-33–Cys-60, Cys-40–Cys-54, and Cys-44–Cys-61.

It belongs to the beta-defensin family.

Its subcellular location is the secreted. Functionally, host defense peptide that exhibits antibacterial and antifungal activity. Exhibits antimicrobial activity against E.coli, S.aureus and C.albicans (in vitro). Has high lipopolysaccharide (LPS)-binding affinity, and may thereby be involved in immunoregulation through LPS neutralization. The sequence is that of Defensin beta 136 (DEFB136) from Homo sapiens (Human).